Here is a 920-residue protein sequence, read N- to C-terminus: KIN14B-interacting protein At4g14310 (920 aa).

The segment covering 1–10 (MSASTNRRRL) has biased composition (basic residues). 2 disordered regions span residues 1-199 (MSAS…EKST) and 309-375 (IDGP…EKPS). Over residues 35–54 (PISSKNSNPALQKSLSSKEN) the composition is skewed to polar residues. Positions 90 to 105 (TRSTSSGLRGRSSSPS) are enriched in low complexity. Over residues 112 to 135 (SDLRKRNESRVIGEKGESGQDKKS) the composition is skewed to basic and acidic residues. Polar residues-rich tracts occupy residues 137–147 (LKSSGFKQGTS) and 166–184 (CPVN…NSIS). Residues 327–337 (LNKEELEDRLL) are compositionally biased toward basic and acidic residues. The segment covering 345–355 (SRTQSKTSSHV) has biased composition (polar residues). Residues 357 to 374 (KGHDSVESNKAVNAEEKP) show a composition bias toward basic and acidic residues. Positions 435–463 (TEILRANEALEEIDDEENREEMELEEIDD) form a coiled coil.

Interacts with KIN14B, CDKA-1, CKS1 and CKS2.

The protein resides in the cytoplasm. Might be involved in division plane determination. This chain is KIN14B-interacting protein At4g14310, found in Arabidopsis thaliana (Mouse-ear cress).